A 189-amino-acid chain; its full sequence is UPF0301 protein PP_4995 (189 aa).

The protein belongs to the UPF0301 (AlgH) family.

The protein is UPF0301 protein PP_4995 of Pseudomonas putida (strain ATCC 47054 / DSM 6125 / CFBP 8728 / NCIMB 11950 / KT2440).